Consider the following 433-residue polypeptide: Enolase (433 aa).

A (2R)-2-phosphoglycerate-binding site is contributed by Q163. Residue E205 is the Proton donor of the active site. Mg(2+) is bound by residues D242, E291, and D318. The (2R)-2-phosphoglycerate site is built by K343, R372, S373, and K394. The active-site Proton acceptor is the K343.

It belongs to the enolase family. Mg(2+) is required as a cofactor.

It localises to the cytoplasm. Its subcellular location is the secreted. The protein localises to the cell surface. It carries out the reaction (2R)-2-phosphoglycerate = phosphoenolpyruvate + H2O. It functions in the pathway carbohydrate degradation; glycolysis; pyruvate from D-glyceraldehyde 3-phosphate: step 4/5. In terms of biological role, catalyzes the reversible conversion of 2-phosphoglycerate (2-PG) into phosphoenolpyruvate (PEP). It is essential for the degradation of carbohydrates via glycolysis. The protein is Enolase of Methylibium petroleiphilum (strain ATCC BAA-1232 / LMG 22953 / PM1).